The chain runs to 76 residues: MKHKVIVNHWEEICEDDSCYEYGTSIIVNGKELIREASIITALKAVLEEIGADVEIEETVESEKCCDSLRKKNLDY.

This is an uncharacterized protein from Bacillus subtilis (strain 168).